We begin with the raw amino-acid sequence, 338 residues long: MSVSGLPFDDFRTLLRDLPGPDARALVTARERDAQLTKPPGALGRLEEIAFWLAAWTGRTPAVNRPLVAIFAGNHGVTRQGITPFPPAVTQQMVENFAAGGAAINQICVAYDLGLKVFDLALDYPTGDITEEAALSERDCAATMAFGMEAIAGGTDLLCIGEMGIGNTTIAAAINYALYGGSARDWVGPGTGSEGEMLERKIAAVEKAVELHGDHLDDPLEIMRRLGGREIAAMAGAILAARMERIPVLIDGYVATAAAAILKAANPSALDHCLIGHVSAEPGHLRAIEMLGKTPLLALGMRLGEGTGAALAAGIVKAAAACHSGMATFAQAGVTNKD.

The active-site Proton acceptor is E305.

The protein belongs to the CobT family.

The enzyme catalyses 5,6-dimethylbenzimidazole + nicotinate beta-D-ribonucleotide = alpha-ribazole 5'-phosphate + nicotinate + H(+). The protein operates within nucleoside biosynthesis; alpha-ribazole biosynthesis; alpha-ribazole from 5,6-dimethylbenzimidazole: step 1/2. Catalyzes the synthesis of alpha-ribazole-5'-phosphate from nicotinate mononucleotide (NAMN) and 5,6-dimethylbenzimidazole (DMB). The sequence is that of Nicotinate-nucleotide--dimethylbenzimidazole phosphoribosyltransferase from Rhizobium leguminosarum bv. trifolii (strain WSM2304).